The chain runs to 279 residues: MATH domain and coiled-coil domain-containing protein At1g31390 (279 aa).

The MATH domain maps to 6-134; that stretch reads EKKITWTIKN…NGDVKIVVEV (129 aa). A coiled-coil region spans residues 235–271; sequence KLDWLEKKLKEVCEARVQEIDEEWKDLTDLKENWSSD.

This is MATH domain and coiled-coil domain-containing protein At1g31390 from Arabidopsis thaliana (Mouse-ear cress).